A 137-amino-acid chain; its full sequence is Large ribosomal subunit protein uL16 (137 aa).

It belongs to the universal ribosomal protein uL16 family. Part of the 50S ribosomal subunit.

Functionally, binds 23S rRNA and is also seen to make contacts with the A and possibly P site tRNAs. This chain is Large ribosomal subunit protein uL16, found in Cereibacter sphaeroides (strain ATCC 17025 / ATH 2.4.3) (Rhodobacter sphaeroides).